Reading from the N-terminus, the 272-residue chain is Aquaporin-1 (272 aa).

Over 1–11 (MASEFKKKLFW) the chain is Cytoplasmic. A helical transmembrane segment spans residues 12–29 (RAVVAEFLAMILFIFISI). The Extracellular segment spans residues 30 to 48 (GSALGFHYPIKSNQTTGAV). N42 carries an N-linked (GlcNAc...) asparagine glycan. A helical transmembrane segment spans residues 49 to 67 (QDNVKVSLAFGLSIATLAQ). Over 68 to 70 (SVG) the chain is Cytoplasmic. The stretch at 71–84 (HISGAHLNPAVTLG) is an intramembrane region. The short motif at 78-80 (NPA) is the NPA 1 element. The Cytoplasmic portion of the chain corresponds to 85–92 (LLLSCQIS). A helical transmembrane segment spans residues 93 to 111 (ILRAIMYIIAQCVGAIVAT). Topologically, residues 112-135 (VILSGITSSLPDNSLGLNALAPGV) are extracellular. Residues 136 to 155 (NSGQGLGIEIIGTLQLVLCV) traverse the membrane as a helical segment. Topologically, residues 156–166 (LATTDRRRRRD) are cytoplasmic. The chain crosses the membrane as a helical span at residues 167–184 (LGDSGPLAIGFSVALGHL). Residues 185-189 (LAIDY) are Extracellular-facing. The stretch at 190–202 (TGCGINPARSFGS) is an intramembrane region. Residues 195–197 (NPA) carry the NPA 2 motif. Residues 203–209 (SVITHNF) are Extracellular-facing. A helical membrane pass occupies residues 210 to 227 (QDHWIFWVGPFIGAALAV). Over 228-272 (LIYDFILAPRSSDLTDRVKVWTSGQVEEYDLDADDINSRVEMKPK) the chain is Cytoplasmic. S250 is modified (phosphoserine). Y256 bears the Phosphotyrosine mark. Position 265 is a phosphoserine (S265).

Belongs to the MIP/aquaporin (TC 1.A.8) family. In terms of assembly, homotetramer; each monomer provides an independent water pore. Component of the ankyrin-1 complex in the erythrocyte, composed of ANK1, RHCE, RHAG, SLC4A1, EPB42, GYPA, GYPB and AQP1. Interacts with EPHB2; involved in endolymph production in the inner ear. Identified in a complex with STOM. Interacts (via the N-terminal) with ANK1 (via ANK 1-5 repeats). Interacts (via the C-terminal) with EPB42. As to expression, detected in fetal kidney (at protein level). Detected in fetal kidney.

The protein resides in the cell membrane. It carries out the reaction H2O(in) = H2O(out). The catalysed reaction is nitric oxide(out) = nitric oxide(in). The enzyme catalyses CO2(out) = CO2(in). It catalyses the reaction glycerol(in) = glycerol(out). It carries out the reaction H2O2(out) = H2O2(in). The catalysed reaction is K(+)(in) = K(+)(out). The enzyme catalyses Na(+)(in) = Na(+)(out). In terms of biological role, forms a water channel that facilitates the transport of water across cell membranes, playing a crucial role in water homeostasis in various tissues. Could also be permeable to small solutes including hydrogen peroxide, glycerol and gases such as amonnia (NH3), nitric oxide (NO) and carbon dioxide (CO2). Recruited to the ankyrin-1 complex, a multiprotein complex of the erythrocyte membrane, it could be part of a CO2 metabolon, linking facilitated diffusion of CO2 across the membrane, anion exchange of Cl(-)/HCO3(-) and interconversion of dissolved CO2 and carbonic acid in the cytosol. In vitro, it shows non-selective gated cation channel activity and may be permeable to cations like K(+) and Na(+) in vivo. This is Aquaporin-1 from Ovis aries (Sheep).